The sequence spans 115 residues: Large ribosomal subunit protein bL19 (115 aa).

The protein belongs to the bacterial ribosomal protein bL19 family.

This protein is located at the 30S-50S ribosomal subunit interface and may play a role in the structure and function of the aminoacyl-tRNA binding site. This is Large ribosomal subunit protein bL19 from Finegoldia magna (strain ATCC 29328 / DSM 20472 / WAL 2508) (Peptostreptococcus magnus).